A 126-amino-acid polypeptide reads, in one-letter code: Protein ApaG (126 aa).

One can recognise an ApaG domain in the interval 2 to 126; the sequence is SDPRYQIDVS…FRLAVPGALH (125 aa).

This chain is Protein ApaG, found in Pseudomonas putida (strain W619).